The following is a 389-amino-acid chain: NAD-dependent protein deacetylase sirtuin-2 (389 aa).

Residues 1–34 (MAEPDPSDPLETQAGKVQEAQDSDSDTEGGATGG) form a disordered region. Residue Ala2 is modified to N-acetylalanine. Phosphoserine occurs at positions 23 and 25. Residue Thr27 is modified to Phosphothreonine. The short motif at 41–51 (LRNLFTQTLGL) is the Nuclear export signal element. The residue at position 53 (Ser53) is a Phosphoserine. One can recognise a Deacetylase sirtuin-type domain in the interval 57 to 338 (RLLDELTLEG…LALADLLGWK (282 aa)). NAD(+) is bound by residues 85–89 (AGIST) and 95–97 (DFR). A Phosphoserine modification is found at Ser100. 167–170 (QNID) serves as a coordination point for NAD(+). The Proton acceptor role is filled by His187. The Zn(2+) site is built by Cys195, Cys200, Cys221, and Cys224. NAD(+) is bound by residues 262 to 263 (TS), 286 to 288 (NKE), and Cys324. Residues 350-389 (ANIDAQSGSQAPNPSTTISPGKSPPPAKEAARTKEKEEQQ) form a disordered region. Over residues 353 to 369 (DAQSGSQAPNPSTTISP) the composition is skewed to polar residues. Phosphoserine is present on residues Ser368 and Ser372. A compositionally biased stretch (basic and acidic residues) spans 378 to 389 (EAARTKEKEEQQ).

The protein belongs to the sirtuin family. Class I subfamily. In terms of assembly, interacts with CDC20, FOXO3 and FZR1. Associates with microtubule in primary cortical mature neurons. Homotrimer. Interacts (via both phosphorylated, unphosphorylated, active or inactive forms) with HDAC6; the interaction is necessary for the complex to interact with alpha-tubulin, suggesting that these proteins belong to a large complex that deacetylates the cytoskeleton. Interacts with FOXO1; the interaction is disrupted upon serum-starvation or oxidative stress, leading to increased level of acetylated FOXO1 and induction of autophagy. Interacts with RELA; the interaction occurs in the cytoplasm and is increased in a TNF-alpha-dependent manner. Interacts with HOXA10; the interaction is direct. Interacts with YWHAB and YWHAG; the interactions occur in a AKT-dependent manner and increase SIRT2-dependent TP53 deacetylation. Interacts with MAPK1/ERK2 and MAPK3/ERK1; the interactions increase SIRT2 stability and deacetylation activity. Interacts (phosphorylated form) with KMT5A isoform 2; the interaction is direct, stimulates KMT5A-mediated methyltransferase activity on histone at 'Lys-20' (H4K20me1) and is increased in a H(2)O(2)-induced oxidative stress-dependent manner. Interacts with G6PD; the interaction is enhanced by H(2)O(2) treatment. Interacts with a G1/S-specific cyclin E-CDK2 complex. Interacts with AURKA, CDK5R1 (p35 form) and CDK5 and HIF1A. Interacts with the tRNA ligase SARS1; recruited to the VEGFA promoter via interaction with SARS1. Isoform 2 and isoform 4 associate with microtubules in primary cortical mature neurons. Interacts with BEX4; negatively regulates alpha-tubulin deacetylation by SIRT2. Zn(2+) serves as cofactor. In terms of processing, phosphorylated at phosphoserine and phosphothreonine. Phosphorylated at Ser-368 by a mitotic kinase CDK1/cyclin B at the G2/M transition; phosphorylation regulates the delay in cell-cycle progression. Phosphorylated at Ser-368 by a mitotic kinase G1/S-specific cyclin E/Cdk2 complex; phosphorylation inactivates SIRT2-mediated alpha-tubulin deacetylation and thereby negatively regulates cell adhesion, cell migration and neurite outgrowth during neuronal differentiation. Phosphorylated by cyclin A/Cdk2 and p35-Cdk5 complexes and to a lesser extent by the cyclin D3/Cdk4 and cyclin B/Cdk1, in vitro. Dephosphorylated at Ser-368 by CDC14A and CDC14B around early anaphase. Post-translationally, acetylated by EP300; acetylation leads both to the decreased of SIRT2-mediated alpha-tubulin deacetylase activity and SIRT2-mediated down-regulation of TP53 transcriptional activity. Ubiquitinated. As to expression, isoform 1 is weakly expressed in the cortex at postnatal(P) days P1, P3 and P7, and increases progressively between P17 and older adult cortex. Isoform 1 is also expressed in heart, liver and skeletal muscle, weakly expressed in the striatum and spinal cord. Isoform 2 is not expressed in the cortex at P1, P3 and P7, and increases strongly and progressively between P17 and older adult cortex. Isoform 2 is also expressed in the heart, liver, striatum and spinal cord. Isoform 4 is weakly expressed in older adult cortex and spinal cords. Expressed in the cortex. Expressed in postnatal sciatic nerves during myelination and during remyelination after nerve injury. Expressed in neurons, oligodendrocytes, Schwann cells, Purkinje cells and in astrocytes of white matter. Strongly expressed in preadipocytes compared with differentiated adipocytes. Expressed in cerebellar granule cells. Expressed in the inner ear: in the cochlea, expressed in types I and V fibrocytes in the spiral ligament (SL) and slightly in stria vascularis (SV); in the organ of Corti, expressed in some supporting cells; in the crista ampullaris, expressed in spiral ganglion cells; also expressed in the endolymphatic sac (ES) epithelial cells (at protein level). Expressed in the brain, spinal cord, optic nerve and hippocampus. Strongly expressed in 6-8 week-old ovulated meiosis II oocytes and weakly expressed in 45-58 week-old ovulated meiosis II oocytes. Expressed in the cochlea, vestibule and acoustic nerve of the inner ear.

The protein localises to the nucleus. The protein resides in the cytoplasm. It localises to the perinuclear region. Its subcellular location is the perikaryon. It is found in the cytoskeleton. The protein localises to the cell projection. The protein resides in the growth cone. It localises to the myelin membrane. Its subcellular location is the microtubule organizing center. It is found in the centrosome. The protein localises to the spindle. The protein resides in the chromosome. It localises to the midbody. Its subcellular location is the centriole. It catalyses the reaction N(6)-acetyl-L-lysyl-[protein] + NAD(+) + H2O = 2''-O-acetyl-ADP-D-ribose + nicotinamide + L-lysyl-[protein]. It carries out the reaction N(6)-tetradecanoyl-L-lysyl-[protein] + NAD(+) + H2O = 2''-O-tetradecanoyl-ADP-D-ribose + nicotinamide + L-lysyl-[protein]. The enzyme catalyses N(6)-hexadecanoyl-L-lysyl-[protein] + NAD(+) + H2O = 2''-O-hexadecanoyl-ADP-D-ribose + nicotinamide + L-lysyl-[protein]. With respect to regulation, inhibited by Sirtinol, A3 and M15 small molecules. Inhibited by nicotinamide. Inhibited by a macrocyclic peptide inhibitor S2iL5. Inhibited by EP300-induced acetylation. NAD-dependent protein deacetylase, which deacetylates internal lysines on histone and alpha-tubulin as well as many other proteins such as key transcription factors. Participates in the modulation of multiple and diverse biological processes such as cell cycle control, genomic integrity, microtubule dynamics, cell differentiation, metabolic networks, and autophagy. Plays a major role in the control of cell cycle progression and genomic stability. Functions in the antephase checkpoint preventing precocious mitotic entry in response to microtubule stress agents, and hence allowing proper inheritance of chromosomes. Positively regulates the anaphase promoting complex/cyclosome (APC/C) ubiquitin ligase complex activity by deacetylating CDC20 and FZR1, then allowing progression through mitosis. Associates both with chromatin at transcriptional start sites (TSSs) and enhancers of active genes. Plays a role in cell cycle and chromatin compaction through epigenetic modulation of the regulation of histone H4 'Lys-20' methylation (H4K20me1) during early mitosis. Specifically deacetylates histone H4 at 'Lys-16' (H4K16ac) between the G2/M transition and metaphase enabling H4K20me1 deposition by KMT5A leading to ulterior levels of H4K20me2 and H4K20me3 deposition throughout cell cycle, and mitotic S-phase progression. Deacetylates KMT5A modulating KMT5A chromatin localization during the mitotic stress response. Also deacetylates histone H3 at 'Lys-57' (H3K56ac) during the mitotic G2/M transition. During oocyte meiosis progression, may deacetylate histone H4 at 'Lys-16' (H4K16ac) and alpha-tubulin, regulating spindle assembly and chromosome alignment by influencing microtubule dynamics and kinetochore function. Deacetylates histone H4 at 'Lys-16' (H4K16ac) at the VEGFA promoter and thereby contributes to regulate expression of VEGFA, a key regulator of angiogenesis. Deacetylates alpha-tubulin at 'Lys-40' and hence controls neuronal motility, oligodendroglial cell arbor projection processes and proliferation of non-neuronal cells. Phosphorylation at Ser-368 by a G1/S-specific cyclin E-CDK2 complex inactivates SIRT2-mediated alpha-tubulin deacetylation, negatively regulating cell adhesion, cell migration and neurite outgrowth during neuronal differentiation. Deacetylates PARD3 and participates in the regulation of Schwann cell peripheral myelination formation during early postnatal development and during postinjury remyelination. Involved in several cellular metabolic pathways. Plays a role in the regulation of blood glucose homeostasis by deacetylating and stabilizing phosphoenolpyruvate carboxykinase PCK1 activity in response to low nutrient availability. Acts as a key regulator in the pentose phosphate pathway (PPP) by deacetylating and activating the glucose-6-phosphate G6PD enzyme, and therefore, stimulates the production of cytosolic NADPH to counteract oxidative damage. Maintains energy homeostasis in response to nutrient deprivation as well as energy expenditure by inhibiting adipogenesis and promoting lipolysis. Attenuates adipocyte differentiation by deacetylating and promoting FOXO1 interaction to PPARG and subsequent repression of PPARG-dependent transcriptional activity. Plays a role in the regulation of lysosome-mediated degradation of protein aggregates by autophagy in neuronal cells. Deacetylates FOXO1 in response to oxidative stress or serum deprivation, thereby negatively regulating FOXO1-mediated autophagy. Deacetylates a broad range of transcription factors and co-regulators regulating target gene expression. Deacetylates transcriptional factor FOXO3 stimulating the ubiquitin ligase SCF(SKP2)-mediated FOXO3 ubiquitination and degradation. Deacetylates HIF1A and therefore promotes HIF1A degradation and inhibition of HIF1A transcriptional activity in tumor cells in response to hypoxia. Deacetylates RELA in the cytoplasm inhibiting NF-kappaB-dependent transcription activation upon TNF-alpha stimulation. Inhibits transcriptional activation by deacetylating p53/TP53 and EP300. Also deacetylates EIF5A. Functions as a negative regulator on oxidative stress-tolerance in response to anoxia-reoxygenation conditions. Plays a role as tumor suppressor. In addition to protein deacetylase activity, also has activity toward long-chain fatty acyl groups and mediates protein-lysine demyristoylation and depalmitoylation of target proteins, such as ARF6 and KRAS, thereby regulating their association with membranes. Functionally, deacetylates alpha-tubulin. This chain is NAD-dependent protein deacetylase sirtuin-2 (Sirt2), found in Mus musculus (Mouse).